Consider the following 152-residue polypeptide: D-aminoacyl-tRNA deacylase (152 aa).

A Gly-cisPro motif, important for rejection of L-amino acids motif is present at residues 137-138 (GP).

Belongs to the DTD family. As to quaternary structure, homodimer.

The protein resides in the cytoplasm. The enzyme catalyses glycyl-tRNA(Ala) + H2O = tRNA(Ala) + glycine + H(+). The catalysed reaction is a D-aminoacyl-tRNA + H2O = a tRNA + a D-alpha-amino acid + H(+). Functionally, an aminoacyl-tRNA editing enzyme that deacylates mischarged D-aminoacyl-tRNAs. Also deacylates mischarged glycyl-tRNA(Ala), protecting cells against glycine mischarging by AlaRS. Acts via tRNA-based rather than protein-based catalysis; rejects L-amino acids rather than detecting D-amino acids in the active site. By recycling D-aminoacyl-tRNA to D-amino acids and free tRNA molecules, this enzyme counteracts the toxicity associated with the formation of D-aminoacyl-tRNA entities in vivo and helps enforce protein L-homochirality. This chain is D-aminoacyl-tRNA deacylase, found in Thermus aquaticus.